The sequence spans 855 residues: Potassium channel AKT2 (855 aa).

The segment covering M1 to S12 has biased composition (low complexity). Residues M1–G24 form a disordered region. Residues M1–D75 lie on the Cytoplasmic side of the membrane. Gly residues predominate over residues G13 to G24. The helical transmembrane segment at T76–M96 threads the bilayer. Residues N97–E105 lie on the Extracellular side of the membrane. The chain crosses the membrane as a helical span at residues V106–A126. The Cytoplasmic portion of the chain corresponds to Y127–T149. A helical transmembrane segment spans residues F150–G170. The Extracellular segment spans residues E171–S179. The helical; Voltage-sensor transmembrane segment at L180–E200 threads the bilayer. Residues K201–R214 lie on the Cytoplasmic side of the membrane. The helical transmembrane segment at L215 to D235 threads the bilayer. At R236–T262 the chain is on the extracellular side. The pore-forming intramembrane region spans S263–A282. Over Q283–T285 the chain is Extracellular. A helical membrane pass occupies residues V286 to I306. The Cytoplasmic segment spans residues G307–S855. L391–H511 serves as a coordination point for a nucleoside 3',5'-cyclic phosphate. ANK repeat units follow at residues N536–V565, K569–I598, Q602–P631, A634–S663, and D667–R696. The disordered stretch occupies residues E744–H765. Residues R768–S855 enclose the KHA domain.

This sequence belongs to the potassium channel family. Plant (TC 1.A.1.4) subfamily. As to quaternary structure, the potassium channel is probably a homo- or heterotetrameric complex of pore-forming subunits.

It is found in the membrane. Probable inward-rectifying potassium channel. Assuming opened or closed conformations in response to the voltage difference across the membrane, the channel is activated by hyperpolarization. The polypeptide is Potassium channel AKT2 (Oryza sativa subsp. japonica (Rice)).